The chain runs to 297 residues: MRNYLNINAINKNDVLHLIQRALALKSGEQPKTKSITAVNLFFENSTRTHSSFQMAENQLNWKQIQIDPQTSSMTKGESLVDTLKTLKAIGVDVAVIRHSQNSWYENVLRSEGHAIPQLVNAGDGSGQHPSQSLLDLVTIYQEFGHFEGLKVRIIGDLAHSRVARSNAEILNKLGATVTFSGPKDWQPVDFDSFGEHVDLDVGWSEQDVVMFLRVQHERITHTENQNFSAKKYHEVYGLTESRYENLKENSIIMHPAPVNRDVEIADDLVEAPKSRIFDQMTNGVYARMAILEYVTE.

Residues R48 and T49 each coordinate carbamoyl phosphate. L-aspartate is bound at residue K76. Residues R98, H129, and Q132 each coordinate carbamoyl phosphate. R162 and R214 together coordinate L-aspartate. Residues A257 and P258 each contribute to the carbamoyl phosphate site.

It belongs to the aspartate/ornithine carbamoyltransferase superfamily. ATCase family. In terms of assembly, heterododecamer (2C3:3R2) of six catalytic PyrB chains organized as two trimers (C3), and six regulatory PyrI chains organized as three dimers (R2).

The enzyme catalyses carbamoyl phosphate + L-aspartate = N-carbamoyl-L-aspartate + phosphate + H(+). Its pathway is pyrimidine metabolism; UMP biosynthesis via de novo pathway; (S)-dihydroorotate from bicarbonate: step 2/3. Its function is as follows. Catalyzes the condensation of carbamoyl phosphate and aspartate to form carbamoyl aspartate and inorganic phosphate, the committed step in the de novo pyrimidine nucleotide biosynthesis pathway. This is Aspartate carbamoyltransferase catalytic subunit from Leuconostoc mesenteroides subsp. mesenteroides (strain ATCC 8293 / DSM 20343 / BCRC 11652 / CCM 1803 / JCM 6124 / NCDO 523 / NBRC 100496 / NCIMB 8023 / NCTC 12954 / NRRL B-1118 / 37Y).